We begin with the raw amino-acid sequence, 203 residues long: Pro-FMRFamide-related neuropeptide VF (203 aa).

Residues 1–26 form the signal peptide; that stretch reads MEIISSKRFILLTLATSSFLTSNTLC. Positions 27–57 are excised as a propeptide; sequence SDELMMPHFHSKEGYGKYYQLRGIPKGVKER. The residue at position 94 (phenylalanine 94) is a Phenylalanine amide. The propeptide occupies 97-106; sequence NIEDRRSPRA. Phenylalanine 125 bears the Phenylalanine amide mark. Residues 128-203 constitute a propeptide that is removed on maturation; sequence TTARRITKTL…QPVLQGAMKL (76 aa). The interval 161 to 186 is disordered; that stretch reads HQEIQSPGQEQPRKRVFTETDDAERK. Residues 171 to 186 show a composition bias toward basic and acidic residues; that stretch reads QPRKRVFTETDDAERK.

The protein belongs to the FARP (FMRFamide related peptide) family. Isoform 1 is expressed at high levels in the hypothalamus and eye. Isoform 2 is specifically expressed in a region between the dorsomedial hypothalamic and ventromedial hypothalamic nuclei.

Its subcellular location is the secreted. Its function is as follows. Efficiently inhibits forskolin-induced production of cAMP. Acts as a potent negative regulator of gonadotropin synthesis and secretion. Induces secretion of prolactin. In terms of biological role, efficiently inhibits forskolin-induced production of cAMP. Blocks morphine-induced analgesia. In Rattus norvegicus (Rat), this protein is Pro-FMRFamide-related neuropeptide VF (Npvf).